The chain runs to 134 residues: Parvalbumin-like EF-hand-containing protein (134 aa).

EF-hand domains follow at residues 55-90 (QLDD…IPSS) and 96-131 (LTDE…EKIP). Residues Asp-68, Asp-70, Ser-72, Phe-74, Glu-76, Glu-79, Asp-109, Asp-113, and Glu-120 each contribute to the Ca(2+) site.

The protein belongs to the parvalbumin family.

The protein is Parvalbumin-like EF-hand-containing protein of Homo sapiens (Human).